A 241-amino-acid polypeptide reads, in one-letter code: MEFEQVLTEARLVRRYRRFLADVEDASGQQWTVHCPNTGSMLGCTEPGARVWLSHSTRPGRKYAQTWELVELPGEVVVGVHTGRANALVGEALDAGLLPELSGYASRRREVRVPDAPMRADWLLEGHPGGEPPCFVEVKNVTAAVEHGRALFPDAVTERGRRHLEVLTEWVRGGGRAALVFCVQRSDAQEVRPAEAIDPRYADALRAAAAEGVEIRAVRLHPSATGIRPDCALPVHYQEEP.

It belongs to the SfsA family.

In Halorhodospira halophila (strain DSM 244 / SL1) (Ectothiorhodospira halophila (strain DSM 244 / SL1)), this protein is Sugar fermentation stimulation protein homolog.